The sequence spans 272 residues: MTREITIGSVKIGGDRPLVLIAGPCVIENEAATLRCAERLMTICNGVSVSLVFKASYDKANRTSVTSFRGPGMQEGLRILQKVKDSLGIPVISDIHSIEQVKPAAEVLDIIQVPAFLCRQTDLVVEVGRTNRVVNVKKGQFMAPWDMENVVGKILSTGNERIILTERGVTFGYNNLVSDMRSLPIMRRIGFPVVFDATHSVQLPGGQGGSSGGQREFVEYLSRAAVATGIDGIFMEVHEDPEKALCDGPNSVKLDDLPALLKKLKAIDAIVK.

The protein belongs to the KdsA family.

It is found in the cytoplasm. It catalyses the reaction D-arabinose 5-phosphate + phosphoenolpyruvate + H2O = 3-deoxy-alpha-D-manno-2-octulosonate-8-phosphate + phosphate. It functions in the pathway carbohydrate biosynthesis; 3-deoxy-D-manno-octulosonate biosynthesis; 3-deoxy-D-manno-octulosonate from D-ribulose 5-phosphate: step 2/3. The protein operates within bacterial outer membrane biogenesis; lipopolysaccharide biosynthesis. In Geobacter sulfurreducens (strain ATCC 51573 / DSM 12127 / PCA), this protein is 2-dehydro-3-deoxyphosphooctonate aldolase.